Consider the following 422-residue polypeptide: WD repeat and SOCS box-containing protein 1 (422 aa).

WD repeat units lie at residues 124-165 (SRCV…LLLN), 168-208 (DHTE…NMMK), 212-251 (GHQN…MIRK), 254-293 (GHYN…ILFE), and 309-346 (DNGR…SYPV). The SOCS box domain maps to 374–422 (NAYFWSTPKYVSSLQHLCRMAIRRVMNTNEVKKLPIPQKIMEFLTYQTM).

Component of a probable ECS E3 ubiquitin-protein ligase complex that contains the Elongin BC complex.

It participates in protein modification; protein ubiquitination. Functionally, probable substrate-recognition component of a SCF-like ECS (Elongin-Cullin-SOCS-box protein) E3 ubiquitin-protein ligase complex which mediates the ubiquitination and subsequent proteasomal degradation of target proteins. In Xenopus tropicalis (Western clawed frog), this protein is WD repeat and SOCS box-containing protein 1 (wsb1).